A 193-amino-acid chain; its full sequence is Rho-related GTP-binding protein RhoA-B (193 aa).

Residues 12 to 19, 30 to 37, 59 to 63, 117 to 120, and 160 to 162 each bind GTP; these read GDGACGKT, FPEVYVPT, DTAGQ, NKKD, and SAK. A (Microbial infection) O-linked (GlcNAc) tyrosine; by Yersinia Afp18 glycan is attached at Y34. C190 carries the cysteine methyl ester modification. Residue C190 is the site of S-geranylgeranyl cysteine attachment. The propeptide at 191–193 is removed in mature form; sequence CLL.

This sequence belongs to the small GTPase superfamily. Rho family. Post-translationally, (Microbial infection) Glycosylated at Tyr-34 by Yersinia ruckeri toxin Afp18. Mono-O-GlcNAcylation by Afp18 inhibits RhoA activation by guanine nucleotide exchange factors and blocks RhoA signaling.

Its subcellular location is the cell membrane. Functionally, regulates a signal transduction pathway linking plasma membrane receptors to the assembly of focal adhesions and actin stress fibers. The sequence is that of Rho-related GTP-binding protein RhoA-B from Danio rerio (Zebrafish).